Consider the following 474-residue polypeptide: ATP synthase subunit beta 2 (474 aa).

153 to 160 provides a ligand contact to ATP; sequence GGAGVGKT.

The protein belongs to the ATPase alpha/beta chains family. In terms of assembly, F-type ATPases have 2 components, CF(1) - the catalytic core - and CF(0) - the membrane proton channel. CF(1) has five subunits: alpha(3), beta(3), gamma(1), delta(1), epsilon(1). CF(0) has three main subunits: a(1), b(2) and c(9-12). The alpha and beta chains form an alternating ring which encloses part of the gamma chain. CF(1) is attached to CF(0) by a central stalk formed by the gamma and epsilon chains, while a peripheral stalk is formed by the delta and b chains.

The protein localises to the cell inner membrane. It catalyses the reaction ATP + H2O + 4 H(+)(in) = ADP + phosphate + 5 H(+)(out). Its function is as follows. Produces ATP from ADP in the presence of a proton gradient across the membrane. The catalytic sites are hosted primarily by the beta subunits. This Syntrophotalea carbinolica (strain DSM 2380 / NBRC 103641 / GraBd1) (Pelobacter carbinolicus) protein is ATP synthase subunit beta 2.